Consider the following 260-residue polypeptide: Small ribosomal subunit protein uS3 (260 aa).

Residues 39–114 (LRQYIEQKLG…QIRINVVEVQ (76 aa)) form the KH type-2 domain. Positions 219-260 (EVAAPPPSTRDRDRDRGDRDREPRRRQQQRRRQQFEDRSNEG) are disordered. Composition is skewed to basic and acidic residues over residues 227–243 (TRDRDRDRGDRDREPRR) and 251–260 (QQFEDRSNEG).

The protein belongs to the universal ribosomal protein uS3 family. Part of the 30S ribosomal subunit. Forms a tight complex with proteins S10 and S14.

Binds the lower part of the 30S subunit head. Binds mRNA in the 70S ribosome, positioning it for translation. This chain is Small ribosomal subunit protein uS3, found in Trichormus variabilis (strain ATCC 29413 / PCC 7937) (Anabaena variabilis).